Consider the following 37-residue polypeptide: Large ribosomal subunit protein bL36 (37 aa).

Belongs to the bacterial ribosomal protein bL36 family.

This Syntrophotalea carbinolica (strain DSM 2380 / NBRC 103641 / GraBd1) (Pelobacter carbinolicus) protein is Large ribosomal subunit protein bL36.